The sequence spans 640 residues: Probable Ufm1-specific protease (640 aa).

Catalysis depends on residues C467, D591, and H593.

Belongs to the peptidase C78 family.

Its function is as follows. Thiol protease which recognizes and hydrolyzes the peptide bond at the C-terminal Gly of ufm-1, a ubiquitin-like modifier protein bound to a number of target proteins. The polypeptide is Probable Ufm1-specific protease (Oryza sativa subsp. japonica (Rice)).